The primary structure comprises 224 residues: Urease accessory protein UreF (224 aa).

This sequence belongs to the UreF family. In terms of assembly, ureD, UreF and UreG form a complex that acts as a GTP-hydrolysis-dependent molecular chaperone, activating the urease apoprotein by helping to assemble the nickel containing metallocenter of UreC. The UreE protein probably delivers the nickel.

The protein resides in the cytoplasm. Required for maturation of urease via the functional incorporation of the urease nickel metallocenter. This chain is Urease accessory protein UreF, found in Escherichia coli O157:H7.